The following is a 153-amino-acid chain: Transcriptional repressor NrdR (153 aa).

The segment at 3 to 34 (CPSCFHNGTRVLDSRPVDEGRSIRRRRECESC) is a zinc-finger region. The ATP-cone domain occupies 49 to 139 (LIVVKKEGTR…VYRQFKDLNV (91 aa)).

This sequence belongs to the NrdR family. Requires Zn(2+) as cofactor.

Its function is as follows. Negatively regulates transcription of bacterial ribonucleotide reductase nrd genes and operons by binding to NrdR-boxes. This chain is Transcriptional repressor NrdR, found in Bacillus cytotoxicus (strain DSM 22905 / CIP 110041 / 391-98 / NVH 391-98).